The primary structure comprises 1483 residues: Cystic fibrosis transmembrane conductance regulator (1483 aa).

Residues 1 to 77 (MQRSPLEKAS…KLINALRRCF (77 aa)) are Cytoplasmic-facing. A helical membrane pass occupies residues 78–98 (FWKFMFYGILLYLGEVTKAVQ). Positions 81–365 (FMFYGILLYL…WAVQTWYDSL (285 aa)) constitute an ABC transmembrane type-1 1 domain. At 99-122 (PLLLGRIIASYDPDNKVERSIAIY) the chain is on the extracellular side. A helical transmembrane segment spans residues 123–146 (LGIGLCLLFVVRTLLLHPAIFGLH). Over 147–195 (HIGMQMRIAMFSLIYKKTLKLSSRVLDKISIGQLISLLSNNLNKFDEGL) the chain is Cytoplasmic. The chain crosses the membrane as a helical span at residues 196–216 (ALAHFVWIVPLQVTLLMGLLW). Residues 217 to 222 (ELLQAS) are Extracellular-facing. A helical transmembrane segment spans residues 223-243 (AFCGLAFLIIVAFYQAGLGRM). Over 244–298 (MMKYRDKRGGKINERLVITSEMIENIQSVKAYCWEEAMEKMIENLRQTELKLTRK) the chain is Cytoplasmic. Residues 299–319 (AAYVRYCNSSAFFFSGFFVVF) traverse the membrane as a helical segment. The Extracellular portion of the chain corresponds to 320 to 339 (LSVLPYALMKGIILRKIFTT). The helical transmembrane segment at 340–358 (ISFCIVLRMAVTRQFPWAV) threads the bilayer. Residues 359-859 (QTWYDSLGAI…YLRYITIHKS (501 aa)) are Cytoplasmic-facing. Residues Trp-401, Ser-434, 458 to 465 (GSTGAGKT), and Gln-493 each bind ATP. The ABC transporter 1 domain occupies 423–646 (NGDNSLFFSN…RPDFSSKLMG (224 aa)). Cys-524 carries the S-palmitoyl cysteine lipid modification. Ser-549 and Ser-660 each carry phosphoserine. The interval 654 to 832 (SAERRNSILT…EEINEEDLKE (179 aa)) is disordered R region. Ser-670 carries the post-translational modification Phosphoserine; by PKA. Residue Ser-686 is modified to Phosphoserine. Lys-688 participates in a covalent cross-link: Glycyl lysine isopeptide (Lys-Gly) (interchain with G-Cter in ubiquitin). Phosphoserine is present on residues Ser-700 and Ser-712. Thr-717 bears the Phosphothreonine mark. Ser-737, Ser-768, Ser-791, Ser-796, and Ser-814 each carry phosphoserine. The helical transmembrane segment at 860–880 (LIFVLIWCLIIFLAEVAVSLV) threads the bilayer. The region spanning 860–1157 (LIFVLIWCLI…AVNSSIDVDS (298 aa)) is the ABC transmembrane type-1 2 domain. At 881-920 (FLLLFEKSPRQDTGNVTKSSNNSSYGVIITNTSSYYIIYI) the chain is on the extracellular side. Residues Asn-895, Asn-901, Asn-902, and Asn-911 are each glycosylated (N-linked (GlcNAc...) asparagine). Residues 921 to 941 (YVGVADTLLALGLLRGLPLVH) form a discontinuously helical membrane-spanning segment. The Cytoplasmic portion of the chain corresponds to 942 to 992 (TLITASKILHHKMLHSVLQAPMSTLNTLKAGGILNRFSKDIAILDDLLPLT). Residues 993 to 1013 (IFDFIQLILIVIGAVIVVSVL) form a helical membrane-spanning segment. Topologically, residues 1014-1015 (EP) are extracellular. The helical transmembrane segment at 1016–1036 (YIFLATVPVIIAFVMLRAYFL) threads the bilayer. Residues 1037–1097 (HTSQQLKQLE…TANWFLYLST (61 aa)) lie on the Cytoplasmic side of the membrane. The chain crosses the membrane as a helical span at residues 1098-1118 (LRWFQMRIEMIFVIFFIAVTF). At 1119–1132 (ISILTTGDGEGRVG) the chain is on the extracellular side. Residues 1133–1153 (IILTLAMNIMNTLQWAVNSSI) form a helical membrane-spanning segment. Residues 1154–1483 (DVDSLMRSVS…TEEEVQETRL (330 aa)) lie on the Cytoplasmic side of the membrane. Residues 1213-1446 (MTVKDLTAKY…KSLFRQAISN (234 aa)) form the ABC transporter 2 domain. Residues Tyr-1222 and 1247 to 1254 (GRTGSGKS) contribute to the ATP site. The interaction with GORASP2 stretch occupies residues 1389–1483 (RTIKQAFADC…TEEEVQETRL (95 aa)). The S-palmitoyl cysteine moiety is linked to residue Cys-1398. Phosphoserine is present on residues Ser-1447 and Ser-1459. Basic residues predominate over residues 1455–1465 (HRNSSKHKSRS). The segment at 1455-1483 (HRNSSKHKSRSKIAALKEETEEEVQETRL) is disordered. Positions 1473-1483 (ETEEEVQETRL) are enriched in acidic residues. Positions 1481–1483 (TRL) match the PDZ-binding motif.

It belongs to the ABC transporter superfamily. ABCC family. CFTR transporter (TC 3.A.1.202) subfamily. Monomer; does not require oligomerization for channel activity. May form oligomers in the membrane. Interacts with SLC26A3, SLC26A6 and NHERF1. Interacts with SHANK2. Interacts with MYO6. Interacts (via C-terminus) with GOPC (via PDZ domain); this promotes CFTR internalization and thereby decreases channel activity. Interacts with SLC4A7 through NHERF1. Found in a complex with MYO5B and RAB11A. Interacts with ANO1. Interacts with SLC26A8. Interacts with AHCYL1; the interaction increases CFTR activity. Interacts with CSE1L. The core-glycosylated form interacts with GORASP2 (via PDZ GRASP-type 1 domain) in respone to ER stress. Interacts with MARCHF2; the interaction leads to CFTR ubiqtuitination and degradation. Interacts with ADGRG2. Post-translationally, N-glycosylated. Phosphorylated; cAMP treatment promotes phosphorylation and activates the channel. Dephosphorylation decreases the ATPase activity (in vitro). Phosphorylation at PKA sites activates the channel. Phosphorylation at PKC sites enhances the response to phosphorylation by PKA. Phosphorylated by AMPK; this inhibits channel activity. In terms of processing, ubiquitinated, leading to its degradation in the lysosome. Deubiquitination by USP10 in early endosomes enhances its endocytic recycling to the cell membrane. Ubiquitinated by RNF185 during ER stress. Ubiquitinated by MARCHF2.

The protein resides in the apical cell membrane. It localises to the early endosome membrane. Its subcellular location is the cell membrane. The protein localises to the recycling endosome membrane. It is found in the endoplasmic reticulum membrane. The protein resides in the nucleus. The enzyme catalyses ATP + H2O + closed Cl(-) channel = ADP + phosphate + open Cl(-) channel.. It carries out the reaction chloride(in) = chloride(out). It catalyses the reaction hydrogencarbonate(in) = hydrogencarbonate(out). The catalysed reaction is ATP + H2O = ADP + phosphate + H(+). Functionally, epithelial ion channel that plays an important role in the regulation of epithelial ion and water transport and fluid homeostasis. Mediates the transport of chloride ions across the cell membrane. The ion channel is also permeable to HCO(3)(-); selectivity depends on the extracellular chloride concentration. Exerts its function also by modulating the activity of other ion channels and transporters. Contributes to the regulation of the pH and the ion content of the epithelial fluid layer. Modulates the activity of the epithelial sodium channel (ENaC) complex, in part by regulating the cell surface expression of the ENaC complex. May regulate bicarbonate secretion and salvage in epithelial cells by regulating the transporter SLC4A7. Can inhibit the chloride channel activity of ANO1. Plays a role in the chloride and bicarbonate homeostasis during sperm epididymal maturation and capacitation. This Atelerix albiventris (Middle-African hedgehog) protein is Cystic fibrosis transmembrane conductance regulator.